The sequence spans 430 residues: Enolase (430 aa).

Residue glutamine 167 coordinates (2R)-2-phosphoglycerate. The active-site Proton donor is glutamate 209. Mg(2+) is bound by residues aspartate 246, glutamate 287, and aspartate 314. Positions 339, 368, 369, and 390 each coordinate (2R)-2-phosphoglycerate. The Proton acceptor role is filled by lysine 339.

It belongs to the enolase family. It depends on Mg(2+) as a cofactor.

It localises to the cytoplasm. Its subcellular location is the secreted. It is found in the cell surface. The enzyme catalyses (2R)-2-phosphoglycerate = phosphoenolpyruvate + H2O. It participates in carbohydrate degradation; glycolysis; pyruvate from D-glyceraldehyde 3-phosphate: step 4/5. Its function is as follows. Catalyzes the reversible conversion of 2-phosphoglycerate (2-PG) into phosphoenolpyruvate (PEP). It is essential for the degradation of carbohydrates via glycolysis. This chain is Enolase, found in Prochlorococcus marinus (strain MIT 9215).